Consider the following 988-residue polypeptide: Little elongation complex subunit 2 (988 aa).

A Phosphoserine modification is found at Ser-322. Disordered regions lie at residues Phe-402–Pro-422 and Val-500–Ser-587. Residues Pro-413–Pro-422 are compositionally biased toward low complexity. Positions Asn-534–Asp-547 are enriched in basic and acidic residues. A compositionally biased stretch (low complexity) spans Asn-563–Ala-576. Ser-587 carries the phosphoserine modification. Thr-589 carries the phosphothreonine modification. Disordered regions lie at residues Asp-604–Glu-633, Pro-673–Ala-706, and Ala-942–Ser-968. Residues Asn-615–Thr-629 show a composition bias toward low complexity.

The protein belongs to the ICE2 family. As to quaternary structure, component of the little elongation complex (LEC), at least composed of ELL (ELL, ELL2 or ELL3), ZC3H8, ICE1 and ICE2. Interacts with ICE1 (via C-terminus domain). Interacts with ELL. Expressed in brain, kidney, liver and testis.

It localises to the nucleus. In terms of biological role, component of the little elongation complex (LEC), a complex required to regulate small nuclear RNA (snRNA) gene transcription by RNA polymerase II and III. The chain is Little elongation complex subunit 2 (Ice2) from Mus musculus (Mouse).